Consider the following 480-residue polypeptide: Ribulose bisphosphate carboxylase large chain (480 aa).

Residues 1 to 2 (MS) constitute a propeptide that is removed on maturation. N-acetylproline is present on Pro-3. Lys-14 is modified (N6,N6,N6-trimethyllysine). Substrate-binding residues include Asn-123 and Thr-173. The Proton acceptor role is filled by Lys-175. Lys-177 serves as a coordination point for substrate. Mg(2+) contacts are provided by Lys-201, Asp-203, and Glu-204. Position 201 is an N6-carboxylysine (Lys-201). Catalysis depends on His-294, which acts as the Proton acceptor. Residues Arg-295, His-327, and Ser-379 each contribute to the substrate site.

This sequence belongs to the RuBisCO large chain family. Type I subfamily. Heterohexadecamer of 8 large chains and 8 small chains; disulfide-linked. The disulfide link is formed within the large subunit homodimers. The cofactor is Mg(2+). Post-translationally, the disulfide bond which can form in the large chain dimeric partners within the hexadecamer appears to be associated with oxidative stress and protein turnover.

Its subcellular location is the plastid. The protein localises to the chloroplast. The enzyme catalyses 2 (2R)-3-phosphoglycerate + 2 H(+) = D-ribulose 1,5-bisphosphate + CO2 + H2O. It catalyses the reaction D-ribulose 1,5-bisphosphate + O2 = 2-phosphoglycolate + (2R)-3-phosphoglycerate + 2 H(+). In terms of biological role, ruBisCO catalyzes two reactions: the carboxylation of D-ribulose 1,5-bisphosphate, the primary event in carbon dioxide fixation, as well as the oxidative fragmentation of the pentose substrate in the photorespiration process. Both reactions occur simultaneously and in competition at the same active site. The sequence is that of Ribulose bisphosphate carboxylase large chain from Mollugo verticillata (Green carpetweed).